The primary structure comprises 158 residues: SsrA-binding protein (158 aa).

Belongs to the SmpB family.

It localises to the cytoplasm. Functionally, required for rescue of stalled ribosomes mediated by trans-translation. Binds to transfer-messenger RNA (tmRNA), required for stable association of tmRNA with ribosomes. tmRNA and SmpB together mimic tRNA shape, replacing the anticodon stem-loop with SmpB. tmRNA is encoded by the ssrA gene; the 2 termini fold to resemble tRNA(Ala) and it encodes a 'tag peptide', a short internal open reading frame. During trans-translation Ala-aminoacylated tmRNA acts like a tRNA, entering the A-site of stalled ribosomes, displacing the stalled mRNA. The ribosome then switches to translate the ORF on the tmRNA; the nascent peptide is terminated with the 'tag peptide' encoded by the tmRNA and targeted for degradation. The ribosome is freed to recommence translation, which seems to be the essential function of trans-translation. The protein is SsrA-binding protein of Glaesserella parasuis serovar 5 (strain SH0165) (Haemophilus parasuis).